Here is a 441-residue protein sequence, read N- to C-terminus: Chitinase-like protein Idgf3 (441 aa).

The signal sequence occupies residues 1 to 23 (MSGSLWLSLALSLAVLAQFKVSA). One can recognise a GH18 domain in the interval 25 to 441 (PNLVCFYDSQ…MLRAIKYRLL (417 aa)). Residues C29 and C56 are joined by a disulfide bond. N221 carries N-linked (GlcNAc...) asparagine glycosylation. The interval 310-331 (GDSGMPVVSSTQGPAPAGPQSK) is disordered. An intrachain disulfide couples C342 to C425.

This sequence belongs to the glycosyl hydrolase 18 family. IDGF subfamily. Glycosylated.

The protein localises to the secreted. Its function is as follows. Cooperates with insulin-like peptides to stimulate the proliferation, polarization and motility of imaginal disk cells. May act by stabilizing the binding of insulin-like peptides to its receptor through a simultaneous interaction with both molecules to form a multiprotein signaling complex. This Drosophila simulans (Fruit fly) protein is Chitinase-like protein Idgf3 (Idgf3).